The sequence spans 207 residues: Large ribosomal subunit protein uL4 (207 aa).

The tract at residues 50 to 76 (AVKNRSAVSGGGRKPWKQKGTGRARQG) is disordered.

Belongs to the universal ribosomal protein uL4 family. As to quaternary structure, part of the 50S ribosomal subunit.

In terms of biological role, one of the primary rRNA binding proteins, this protein initially binds near the 5'-end of the 23S rRNA. It is important during the early stages of 50S assembly. It makes multiple contacts with different domains of the 23S rRNA in the assembled 50S subunit and ribosome. Forms part of the polypeptide exit tunnel. In Staphylococcus aureus (strain JH9), this protein is Large ribosomal subunit protein uL4.